The following is a 960-amino-acid chain: Glycine dehydrogenase (decarboxylating) (960 aa).

Lys709 bears the N6-(pyridoxal phosphate)lysine mark.

Belongs to the GcvP family. In terms of assembly, the glycine cleavage system is composed of four proteins: P, T, L and H. Requires pyridoxal 5'-phosphate as cofactor.

The enzyme catalyses N(6)-[(R)-lipoyl]-L-lysyl-[glycine-cleavage complex H protein] + glycine + H(+) = N(6)-[(R)-S(8)-aminomethyldihydrolipoyl]-L-lysyl-[glycine-cleavage complex H protein] + CO2. In terms of biological role, the glycine cleavage system catalyzes the degradation of glycine. The P protein binds the alpha-amino group of glycine through its pyridoxal phosphate cofactor; CO(2) is released and the remaining methylamine moiety is then transferred to the lipoamide cofactor of the H protein. This chain is Glycine dehydrogenase (decarboxylating), found in Hahella chejuensis (strain KCTC 2396).